Consider the following 384-residue polypeptide: Glucans biosynthesis protein C (384 aa).

10 consecutive transmembrane segments (helical) span residues 17 to 37, 54 to 74, 91 to 111, 140 to 160, 173 to 193, 212 to 232, 240 to 260, 274 to 294, 311 to 331, and 338 to 358; these read AWLM…THSW, FIHA…SYML, VGIP…ILLQ, LWFL…FTWF, AISL…YAAI, FIVM…LAFI, FTTP…AYLL, TESV…FSLG, ASLF…AYIT, and LIGF…LYEI.

The protein belongs to the acyltransferase 3 family. OpgC subfamily.

Its subcellular location is the cell membrane. It participates in glycan metabolism; osmoregulated periplasmic glucan (OPG) biosynthesis. In terms of biological role, necessary for the succinyl substitution of periplasmic glucans. Could catalyze the transfer of succinyl residues from the cytoplasmic side of the membrane to the nascent glucan backbones on the periplasmic side of the membrane. In Salmonella typhimurium (strain LT2 / SGSC1412 / ATCC 700720), this protein is Glucans biosynthesis protein C.